A 173-amino-acid chain; its full sequence is Nanos homolog 3 (173 aa).

A disordered region spans residues 23–51; the sequence is KEGPETRLSPQPEPEPMLEPDQKRSLESS. Residues 57 to 111 form a Nanos-type zinc finger; the sequence is LCSFCKHNGESRAIYQSHVLKDEAGRVLCPILRDYVCPQCGATRERAHTRRFCPL. 8 residues coordinate Zn(2+): Cys58, Cys61, His74, Cys85, Cys93, Cys96, His104, and Cys109. Short sequence motifs (C2HC) lie at residues 58–85 and 93–109; these read CSFC…RVLC and CPQC…RRFC. Residues 123-173 form a disordered region; that stretch reads TTRNSAGKKLVRPDKAKTQDTGHRRGGGGGAGFRGAGKSEPSPSCSPSMST. A compositionally biased stretch (basic and acidic residues) spans 133 to 145; that stretch reads VRPDKAKTQDTGH. The span at 161–173 shows a compositional bias: low complexity; the sequence is SEPSPSCSPSMST.

Belongs to the nanos family. As to quaternary structure, binds mRNA from germ cells. Interacts with PUM2. Ovary, testis and brain (at protein level). In the ovaries, expressed during multiple stages of oogenesis, including primordial, primary, secondary and antral follicles with the highest expression in the oocytes. In the testis, expressed in germ cells, type A spermatogonia (SA), primary spermatocytes (S1), round spermatids (S3) and elongated spermatids.

It localises to the nucleus. The protein localises to the cytoplasm. The protein resides in the stress granule. Its subcellular location is the P-body. Plays a role in the maintenance of the undifferentiated state of germ cells regulating the spermatogonia cell cycle and inducing a prolonged transit in G1 phase. Affects cell proliferation probably by repressing translation of specific mRNAs. Maintains the germ cell lineage by suppressing both Bax-dependent and -independent apoptotic pathways. Essential in the early stage embryo to protect the migrating primordial germ cells (PGCs) from apoptosis. The protein is Nanos homolog 3 (NANOS3) of Homo sapiens (Human).